The following is a 366-amino-acid chain: Flagellar P-ring protein (366 aa).

An N-terminal signal peptide occupies residues 1–23 (MRTLKIFALAVSLLSMLAAPVQA).

This sequence belongs to the FlgI family. In terms of assembly, the basal body constitutes a major portion of the flagellar organelle and consists of four rings (L,P,S, and M) mounted on a central rod.

The protein resides in the periplasm. It is found in the bacterial flagellum basal body. Assembles around the rod to form the L-ring and probably protects the motor/basal body from shearing forces during rotation. The protein is Flagellar P-ring protein of Idiomarina loihiensis (strain ATCC BAA-735 / DSM 15497 / L2-TR).